Reading from the N-terminus, the 416-residue chain is S-adenosylmethionine synthase (416 aa).

Residue His14 coordinates ATP. Asp16 contacts Mg(2+). Glu42 is a binding site for K(+). Glu55 and Gln98 together coordinate L-methionine. The segment at 98–108 (QSADINQGVDR) is flexible loop. Residues 164–166 (DAK), 240–241 (KF), Asp249, 255–256 (RK), Ala272, and Lys276 each bind ATP. An L-methionine-binding site is contributed by Asp249. Lys280 contributes to the L-methionine binding site.

It belongs to the AdoMet synthase family. As to quaternary structure, homotetramer; dimer of dimers. Requires Mg(2+) as cofactor. It depends on K(+) as a cofactor.

It is found in the cytoplasm. The enzyme catalyses L-methionine + ATP + H2O = S-adenosyl-L-methionine + phosphate + diphosphate. Its pathway is amino-acid biosynthesis; S-adenosyl-L-methionine biosynthesis; S-adenosyl-L-methionine from L-methionine: step 1/1. Its function is as follows. Catalyzes the formation of S-adenosylmethionine (AdoMet) from methionine and ATP. The overall synthetic reaction is composed of two sequential steps, AdoMet formation and the subsequent tripolyphosphate hydrolysis which occurs prior to release of AdoMet from the enzyme. The sequence is that of S-adenosylmethionine synthase from Flavobacterium johnsoniae (strain ATCC 17061 / DSM 2064 / JCM 8514 / BCRC 14874 / CCUG 350202 / NBRC 14942 / NCIMB 11054 / UW101) (Cytophaga johnsonae).